A 241-amino-acid polypeptide reads, in one-letter code: Agamous-like MADS-box protein AGL8 homolog (241 aa).

The MADS-box domain occupies arginine 3–tyrosine 57. Positions serine 88–asparagine 178 constitute a K-box domain.

The protein localises to the nucleus. Its function is as follows. Probable transcription factor. The protein is Agamous-like MADS-box protein AGL8 homolog (AGL8) of Sinapis alba (White mustard).